The primary structure comprises 707 residues: F-box/WD repeat-containing protein 7 (707 aa).

The segment at 1–151 is disordered; sequence MNQELLSVGS…SVTNSSSIVD (151 aa). At Ser-26 the chain carries Phosphoserine; by ATM. Residues 57 to 68 show a composition bias toward low complexity; the sequence is GEVVGVEPRPGG. Positions 69–84 are enriched in polar residues; that stretch reads QNDSQQGQLEENNNRF. Over residues 87–129 the composition is skewed to acidic residues; the sequence is VDEDSSGNQEEQEEDEEHAGEQDEEDEEEEEMDQESDDFDQSD. Positions 130-139 are enriched in basic and acidic residues; the sequence is DSSREDEHTH. Residue Thr-205 is modified to Phosphothreonine. Phosphoserine; by SGK1 is present on Ser-227. The region spanning 278-324 is the F-box domain; it reads RDFISLLPKELALYVLSFLEPKDLLQAAQTCRYWRILAEDNLLWREK. WD repeat units lie at residues 378–418, 420–456, 459–498, 500–536, 539–578, 580–618, and 622–659; these read GHDD…RTLV, HTGGVWSSQMRDNIIISGSTDRTLKVWNAETGECIHT, GHTSTVRCMHLHEKRVVSGSRDATLRVWDIETGQCLHVLM, HVAAVRCVQYDGRRVVSGAYDFMVKVWDPETETCLHT, GHTNRVYSLQFDGIHVVSGSLDTSIRVWDVETGNCIHTLT, HQSLTSGMELKDNILVSGNADSTVKIWDIKTGQCLQTLQ, and KHQSAVTCLQFNKNFVITSSDDGTVKLWDLKTGEFIRN.

Homodimer; homodimerization plays a role in substrate binding and/or ubiquitination and degradation. Component of the SCF(FBXW7) complex consisting of CUL1, RBX1, SKP1 and FBXW7. Interacts (via F-box domain) with SKP1. Interacts (via F-box domain) with pseudophosphatase STYX; the interaction is direct and prevents FBXW7 interaction with SKP1. Interacts with cyclin-E (CCNE1 or CCNE2). Interacts with PSEN1. Forms a trimeric complex with NOTCH1 and SGK1. Interacts with NOTCH1 intracellular domain/NICD and NOTCH4 intracellular domain/NICD. Interacts with NOTCH2 intracellular domain (N2ICD). Interacts with MYC (when phosphorylated). Interacts with USP28, counteracting ubiquitination of MYC. Interacts with JUN. Found in a complex with JUN and PRR7. Interacts with JUN and PRR7; the interaction inhibits ubiquitination-mediated JUN degradation, promoting its phosphorylation and transcriptional activity. Interacts (when phosphorylated at Thr-205) with PIN1, disrupting FBXW7 dimerization and promoting FBXW7 autoubiquitination and degradation. Interacts with UBE2QL1. Interacts with FAM83D; promotes FBXW7 degradation. Interacts with MYCN; FBXW7 competes with AURKA for binding to unphosphorylated MYCN but not for binding to phosphorylated MYCN. Interacts with STOML1. Interacts with NFE2L1. Interacts with USP36, counteracting ubiquitination of MYC. Interacts with NR1D1. Interacts with RICTOR; mediates RICTOR ubiquitination and degradation. Interacts with USP38, counteracting ubiquitination of MYC. As to quaternary structure, (Microbial infection) Interacts (via WD repeats) with SV40 large T antigen (via CPD region). Post-translationally, phosphorylation at Thr-205 promotes interaction with PIN1, leading to disrupt FBXW7 dimerization and promoting FBXW7 autoubiquitination and degradation. Phosphorylated by ATM at Ser-26 in response to DNA damage, promoting recruitment to DNA damage sites and 'Lys-63'-linked ubiquitination of phosphorylated XRCC4. In terms of processing, ubiquitinated: autoubiquitinates following phosphorylation at Thr-205 and subsequent interaction with PIN1. Ubiquitination leads to its proteasomal degradation. In terms of tissue distribution, widely expressed. As to expression, expressed in brain.

The protein resides in the nucleus. Its subcellular location is the nucleoplasm. It is found in the chromosome. It localises to the cytoplasm. The protein localises to the nucleolus. The protein operates within protein modification; protein ubiquitination. Its function is as follows. Substrate recognition component of a SCF (SKP1-CUL1-F-box protein) E3 ubiquitin-protein ligase complex which mediates the ubiquitination and subsequent proteasomal degradation of target proteins. Recognizes and binds phosphorylated sites/phosphodegrons within target proteins and thereafter brings them to the SCF complex for ubiquitination. Identified substrates include cyclin-E (CCNE1 or CCNE2), DISC1, JUN, MYC, NOTCH1 released notch intracellular domain (NICD), NFE2L1, NOTCH2, MCL1, MLST8, RICTOR, and probably PSEN1. Acts as a negative regulator of JNK signaling by binding to phosphorylated JUN and promoting its ubiquitination and subsequent degradation. Involved in bone homeostasis and negative regulation of osteoclast differentiation. Regulates the amplitude of the cyclic expression of hepatic core clock genes and genes involved in lipid and glucose metabolism via ubiquitination and proteasomal degradation of their transcriptional repressor NR1D1; CDK1-dependent phosphorylation of NR1D1 is necessary for SCF(FBXW7)-mediated ubiquitination. Also able to promote 'Lys-63'-linked ubiquitination in response to DNA damage. The SCF(FBXW7) complex facilitates double-strand break repair following phosphorylation by ATM: phosphorylation promotes localization to sites of double-strand breaks and 'Lys-63'-linked ubiquitination of phosphorylated XRCC4, enhancing DNA non-homologous end joining. The polypeptide is F-box/WD repeat-containing protein 7 (Homo sapiens (Human)).